The sequence spans 257 residues: Acetylglutamate kinase (257 aa).

Substrate contacts are provided by residues 43–44 (GG), Arg-65, and Asn-157. ATP-binding positions include 180–185 (DVSGIL) and 208–210 (IIT).

This sequence belongs to the acetylglutamate kinase family. ArgB subfamily. As to quaternary structure, homodimer.

The protein localises to the cytoplasm. The enzyme catalyses N-acetyl-L-glutamate + ATP = N-acetyl-L-glutamyl 5-phosphate + ADP. It participates in amino-acid biosynthesis; L-arginine biosynthesis; N(2)-acetyl-L-ornithine from L-glutamate: step 2/4. Catalyzes the ATP-dependent phosphorylation of N-acetyl-L-glutamate. The protein is Acetylglutamate kinase of Edwardsiella ictaluri (strain 93-146).